The chain runs to 508 residues: MWELVALLLLTLAYLFWPKRRCPGAKYPKSLLSLPLVGSLPFLPRHGHMHNNFFKLQKKYGPIYSVRMGTKTTVIVGHHQLAKEVLIKKGKDFSGRPQVTTLDILSNNRKGIAFADYGAHWQLHRRLAMATFALFKDGDQKLEKIICQEISTLCDMLATHNGQTIDISFPVFVAITNVISLICFNISYKNGDPELKIVHNYNEGIIDSLGKESLVDLFPWLKVFPNKTLEKLKRHVKTRNDLLTKIFENYKEKFHSDSITNMLDVLMQAKMNSDNGNAGPDQDSELLSDNHILTTIGDIFGAGVETTTSVVKWIVAFLLHNPQVKKKLYEEIDQNVGFSRTPTISDRNRLLLLEATIREVLRIRPVAPMLIPHKANVDSSIGEFAVDKGTHVIINLWALHHNEKEWHQPDQFMPERFLNPAGTQLISPSLSYLPFGAGPRSCIGEILARQELFLIMAWLLQRFDLEVPDDGQLPSLEGNPKVVFLIDSFKVKIKVRQAWREAQAEGST.

Substrate is bound at residue N202. C442 serves as a coordination point for heme.

It belongs to the cytochrome P450 family. The cofactor is heme.

It is found in the endoplasmic reticulum membrane. It localises to the microsome membrane. It catalyses the reaction a C21-steroid + reduced [NADPH--hemoprotein reductase] + O2 = a 17alpha-hydroxy-C21-steroid + oxidized [NADPH--hemoprotein reductase] + H2O + H(+). It carries out the reaction progesterone + reduced [NADPH--hemoprotein reductase] + O2 = 17alpha-hydroxyprogesterone + oxidized [NADPH--hemoprotein reductase] + H2O + H(+). The enzyme catalyses pregnenolone + reduced [NADPH--hemoprotein reductase] + O2 = 17alpha-hydroxypregnenolone + oxidized [NADPH--hemoprotein reductase] + H2O + H(+). The catalysed reaction is 17alpha-hydroxyprogesterone + reduced [NADPH--hemoprotein reductase] + O2 = androst-4-ene-3,17-dione + acetate + oxidized [NADPH--hemoprotein reductase] + H2O + 2 H(+). It catalyses the reaction 17alpha-hydroxyprogesterone + reduced [NADPH--hemoprotein reductase] + O2 = 16alpha,17alpha-dihydroxyprogesterone + oxidized [NADPH--hemoprotein reductase] + H2O + H(+). It carries out the reaction 16alpha,17alpha-dihydroxyprogesterone + reduced [NADPH--hemoprotein reductase] + O2 = 6beta,16alpha,17alpha-trihydroxyprogesterone + oxidized [NADPH--hemoprotein reductase] + H2O + H(+). The enzyme catalyses 17alpha-hydroxypregnenolone + reduced [NADPH--hemoprotein reductase] + O2 = 3beta-hydroxyandrost-5-en-17-one + acetate + oxidized [NADPH--hemoprotein reductase] + H2O + 2 H(+). The catalysed reaction is 16alpha,17alpha-dihydroxypregnenolone + reduced [NADPH--hemoprotein reductase] + O2 = 3beta,16alpha-dihydroxy-androst-5-en-17-one + acetate + oxidized [NADPH--hemoprotein reductase] + H2O + 2 H(+). It catalyses the reaction 3beta-hydroxyandrost-5-en-17-one + reduced [NADPH--hemoprotein reductase] + O2 = 3beta,16alpha-dihydroxy-androst-5-en-17-one + oxidized [NADPH--hemoprotein reductase] + H2O + H(+). It carries out the reaction androst-4-ene-3,17-dione + reduced [NADPH--hemoprotein reductase] + O2 = 16alpha-hydroxyandrost-4-ene-3,17-dione + oxidized [NADPH--hemoprotein reductase] + H2O + H(+). It functions in the pathway steroid hormone biosynthesis. It participates in steroid biosynthesis; glucocorticoid biosynthesis. Regulated predominantly by intracellular cAMP levels. The 17,20-lyase activity is stimulated by cytochrome b5, which acts as an allosteric effector increasing the Vmax of the lyase activity. In terms of biological role, a cytochrome P450 monooxygenase involved in corticoid and androgen biosynthesis. Catalyzes 17-alpha hydroxylation of C21 steroids, which is common for both pathways. A second oxidative step, required only for androgen synthesis, involves an acyl-carbon cleavage. The 17-alpha hydroxy intermediates, as part of adrenal glucocorticoids biosynthesis pathway, are precursors of cortisol. Hydroxylates steroid hormones, pregnenolone and progesterone to form 17-alpha hydroxy metabolites, followed by the cleavage of the C17-C20 bond to form C19 steroids, dehydroepiandrosterone (DHEA) and androstenedione. Has 16-alpha hydroxylase activity. Catalyzes 16-alpha hydroxylation of 17-alpha hydroxy pregnenolone, followed by the cleavage of the C17-C20 bond to form 16-alpha-hydroxy DHEA. Also 16-alpha hydroxylates androgens, relevant for estriol synthesis. Mechanistically, uses molecular oxygen inserting one oxygen atom into a substrate, and reducing the second into a water molecule, with two electrons provided by NADPH via cytochrome P450 reductase (CPR; NADPH-ferrihemoprotein reductase). In Macaca fascicularis (Crab-eating macaque), this protein is Steroid 17-alpha-hydroxylase/17,20 lyase (CYP17A1).